The primary structure comprises 482 residues: ATP synthase subunit beta (482 aa).

162–169 is an ATP binding site; the sequence is GGAGVGKT.

This sequence belongs to the ATPase alpha/beta chains family. As to quaternary structure, F-type ATPases have 2 components, CF(1) - the catalytic core - and CF(0) - the membrane proton channel. CF(1) has five subunits: alpha(3), beta(3), gamma(1), delta(1), epsilon(1). CF(0) has four main subunits: a(1), b(1), b'(1) and c(9-12).

It localises to the cellular thylakoid membrane. It carries out the reaction ATP + H2O + 4 H(+)(in) = ADP + phosphate + 5 H(+)(out). In terms of biological role, produces ATP from ADP in the presence of a proton gradient across the membrane. The catalytic sites are hosted primarily by the beta subunits. The polypeptide is ATP synthase subunit beta (Synechococcus sp. (strain PCC 6716)).